The following is an 803-amino-acid chain: Sensor histidine kinase CheAY (803 aa).

H47 bears the Phosphohistidine mark. 2 disordered regions span residues 134 to 185 (LESA…DEPD) and 209 to 255 (EADK…ENKA). 3 stretches are compositionally biased toward basic and acidic residues: residues 136 to 166 (SAKERTTEAPQKENKEETKEEAKEENKENKA), 209 to 226 (EADKERRAQKKQEAKPKQ), and 233 to 254 (ETPKAPKTETKAKAKADTEENK). The region spanning 270 to 517 (RLDHLMNLIG…TQKLKIPLTL (248 aa)) is the Histidine kinase domain. The residue at position 273 (H273) is a Phosphohistidine; by autocatalysis. The region spanning 519 to 653 (IIQALLVGVQ…VGAMMDMAKS (135 aa)) is the CheW-like domain. The region spanning 678–796 (IVLAIDDSST…YLTTVVKRSI (119 aa)) is the Response regulatory domain. Residue D729 is modified to 4-aspartylphosphate.

In terms of processing, autophosphorylated.

The enzyme catalyses ATP + protein L-histidine = ADP + protein N-phospho-L-histidine.. In terms of biological role, member of the two-component regulatory system CheAY/CheY that regulates chemotaxis and colonization of the gastric mucosa. Functions as a sensor protein kinase which is autophosphorylated at a histidine residue and transfers its phosphate group to the conserved aspartic acid residue in the regulatory domain of CheY. In turn, phosphorylated CheY (CheY-P) interacts with the flagellar motor protein FliM to cause clockwise flagellar rotation and bacterial reversals, as opposed to straight swimming when CheY is not phosphorylated. This Helicobacter pylori (strain ATCC 700392 / 26695) (Campylobacter pylori) protein is Sensor histidine kinase CheAY (cheAY).